Here is a 535-residue protein sequence, read N- to C-terminus: D-2-hydroxyglutarate dehydrogenase, mitochondrial (535 aa).

The N-terminal 50 residues, methionine 1 to tyrosine 50, are a transit peptide targeting the mitochondrion. The 180-residue stretch at valine 110–arginine 289 folds into the FAD-binding PCMH-type domain. Residue lysine 115 is modified to N6-succinyllysine. 3 residues coordinate (R)-2-hydroxyglutarate: arginine 400, threonine 404, and lysine 415. Arginine 400 contributes to the (R)-lactate binding site. (R)-malate contacts are provided by arginine 400, threonine 404, and lysine 415. 2 residues coordinate Zn(2+): histidine 448 and histidine 455. Asparagine 457 is a (R)-2-hydroxyglutarate binding site. Residue glutamate 489 participates in Zn(2+) binding. Histidine 490 provides a ligand contact to (R)-2-hydroxyglutarate. Residue histidine 490 participates in (R)-lactate binding. Histidine 490 is a (R)-malate binding site.

The protein belongs to the FAD-binding oxidoreductase/transferase type 4 family. FAD serves as cofactor.

It is found in the mitochondrion. The catalysed reaction is (R)-2-hydroxyglutarate + A = 2-oxoglutarate + AH2. It carries out the reaction (R)-malate + A = oxaloacetate + AH2. With respect to regulation, activated by zinc, cobalt and manganese ions. Inhibited by EDTA. Its function is as follows. Catalyzes the oxidation of D-2-hydroxyglutarate (D-2-HG) to alpha-ketoglutarate. Also catalyzes the oxidation of other D-2-hydroxyacids, such as D-malate (D-MAL) and D-lactate (D-LAC). Exhibits high activities towards D-2-HG and D-MAL but a very weak activity towards D-LAC. The protein is D-2-hydroxyglutarate dehydrogenase, mitochondrial of Rattus norvegicus (Rat).